Here is a 565-residue protein sequence, read N- to C-terminus: Oxygen-dependent choline dehydrogenase (565 aa).

An FAD-binding site is contributed by 6-35 (DYIIVGAGSAGNTLATRLTEDAGVTVLLLE). Positions 182–201 (QQEGFGPMDRTVTKNGRRSS) are disordered. His475 acts as the Proton acceptor in catalysis.

This sequence belongs to the GMC oxidoreductase family. It depends on FAD as a cofactor.

It catalyses the reaction choline + A = betaine aldehyde + AH2. The catalysed reaction is betaine aldehyde + NAD(+) + H2O = glycine betaine + NADH + 2 H(+). The protein operates within amine and polyamine biosynthesis; betaine biosynthesis via choline pathway; betaine aldehyde from choline (cytochrome c reductase route): step 1/1. Involved in the biosynthesis of the osmoprotectant glycine betaine. Catalyzes the oxidation of choline to betaine aldehyde and betaine aldehyde to glycine betaine at the same rate. This is Oxygen-dependent choline dehydrogenase from Pseudomonas putida (strain ATCC 47054 / DSM 6125 / CFBP 8728 / NCIMB 11950 / KT2440).